The following is a 58-amino-acid chain: U-scoloptoxin(14)-Sa1a (58 aa).

The signal sequence occupies residues 1-18; that stretch reads MNRILGMIFLFCLISCYA.

It belongs to the scoloptoxin-14 family. Post-translationally, contains 4 disulfide bonds. As to expression, expressed by the venom gland.

It localises to the secreted. The protein is U-scoloptoxin(14)-Sa1a of Scolopendra alternans (Florida Keys giant centipede).